A 204-amino-acid chain; its full sequence is Minor allergen Alt a 7 (204 aa).

The Flavodoxin-like domain occupies 5–195 (IAIVYYSMYG…NIAQAQGKAF (191 aa)).

The protein belongs to the WrbA family.

It localises to the cytoplasm. This Alternaria alternata (Alternaria rot fungus) protein is Minor allergen Alt a 7 (ALTA7).